The chain runs to 458 residues: Tetratricopeptide repeat protein 23-like (458 aa).

Coiled coils occupy residues 175–198 (GKQA…LNNG) and 246–278 (TSEL…QAYS).

It localises to the cytoplasm. It is found in the cytoskeleton. The protein resides in the microtubule organizing center. The protein localises to the centrosome. Its subcellular location is the spindle. It localises to the midbody. The polypeptide is Tetratricopeptide repeat protein 23-like (Ttc23l) (Mus musculus (Mouse)).